The sequence spans 1056 residues: Isoleucine--tRNA ligase (1056 aa).

The 'HIGH' region motif lies at 56-66; the sequence is PFATGLPHYGH. Residues 603–607 carry the 'KMSKS' region motif; that stretch reads KMSKS. Lysine 606 lines the ATP pocket.

Belongs to the class-I aminoacyl-tRNA synthetase family. IleS type 2 subfamily. As to quaternary structure, monomer. Zn(2+) is required as a cofactor.

The protein localises to the cytoplasm. It carries out the reaction tRNA(Ile) + L-isoleucine + ATP = L-isoleucyl-tRNA(Ile) + AMP + diphosphate. Catalyzes the attachment of isoleucine to tRNA(Ile). As IleRS can inadvertently accommodate and process structurally similar amino acids such as valine, to avoid such errors it has two additional distinct tRNA(Ile)-dependent editing activities. One activity is designated as 'pretransfer' editing and involves the hydrolysis of activated Val-AMP. The other activity is designated 'posttransfer' editing and involves deacylation of mischarged Val-tRNA(Ile). The sequence is that of Isoleucine--tRNA ligase from Bdellovibrio bacteriovorus (strain ATCC 15356 / DSM 50701 / NCIMB 9529 / HD100).